The chain runs to 232 residues: 2-C-methyl-D-erythritol 4-phosphate cytidylyltransferase (232 aa).

Belongs to the IspD/TarI cytidylyltransferase family. IspD subfamily.

The enzyme catalyses 2-C-methyl-D-erythritol 4-phosphate + CTP + H(+) = 4-CDP-2-C-methyl-D-erythritol + diphosphate. The protein operates within isoprenoid biosynthesis; isopentenyl diphosphate biosynthesis via DXP pathway; isopentenyl diphosphate from 1-deoxy-D-xylulose 5-phosphate: step 2/6. Its function is as follows. Catalyzes the formation of 4-diphosphocytidyl-2-C-methyl-D-erythritol from CTP and 2-C-methyl-D-erythritol 4-phosphate (MEP). In Bacillus velezensis (strain DSM 23117 / BGSC 10A6 / LMG 26770 / FZB42) (Bacillus amyloliquefaciens subsp. plantarum), this protein is 2-C-methyl-D-erythritol 4-phosphate cytidylyltransferase.